The following is a 443-amino-acid chain: Xaa-Pro dipeptidase (443 aa).

Mn(2+) is bound by residues Asp-246, Asp-257, His-339, Glu-384, and Glu-423.

Belongs to the peptidase M24B family. Bacterial-type prolidase subfamily. Requires Mn(2+) as cofactor.

It carries out the reaction Xaa-L-Pro dipeptide + H2O = an L-alpha-amino acid + L-proline. In terms of biological role, splits dipeptides with a prolyl residue in the C-terminal position. The protein is Xaa-Pro dipeptidase of Salmonella paratyphi B (strain ATCC BAA-1250 / SPB7).